Reading from the N-terminus, the 173-residue chain is Shikimate kinase 2 (173 aa).

12–17 (GCGKTT) is an ATP binding site. Mg(2+) is bound by residues T16 and D32. Substrate contacts are provided by D34, R58, and G79. The tract at residues 112-126 (QASPQAHQRPTLTGR) is LID domain. Residue R120 coordinates ATP. R139 provides a ligand contact to substrate. Q155 lines the ATP pocket.

As to quaternary structure, monomer. The cofactor is Mg(2+).

The protein localises to the cytoplasm. The enzyme catalyses shikimate + ATP = 3-phosphoshikimate + ADP + H(+). It functions in the pathway metabolic intermediate biosynthesis; chorismate biosynthesis; chorismate from D-erythrose 4-phosphate and phosphoenolpyruvate: step 5/7. Inhibited by chloride and sulfate ions. Its function is as follows. Catalyzes the specific phosphorylation of the 3-hydroxyl group of shikimic acid using ATP as a cosubstrate. The protein is Shikimate kinase 2 (aroL) of Dickeya chrysanthemi (Pectobacterium chrysanthemi).